We begin with the raw amino-acid sequence, 653 residues long: Mannosyl-oligosaccharide 1,2-alpha-mannosidase IA (653 aa).

Residues 1-41 lie on the Cytoplasmic side of the membrane; it reads MPVGGLLPLFSSPAGGVLGGGLGGGGGRKGSGPAALRLTEK. A helical; Signal-anchor for type II membrane protein membrane pass occupies residues 42 to 62; sequence FVLLLVFSAFITLCFGAIFFL. Topologically, residues 63–653 are lumenal; that stretch reads PDSSKLLSGV…DKKEVEIREE (591 aa). Residues 81–116 are disordered; that stretch reads QPAADHKPGPGARAEDAAEGRARRREEGAPGDPEAA. The segment covering 84–108 has biased composition (basic and acidic residues); the sequence is ADHKPGPGARAEDAAEGRARRREEG. Cysteines 476 and 508 form a disulfide. Asparagine 513 carries N-linked (GlcNAc...) asparagine glycosylation. Glutamate 522 (proton donor) is an active-site residue.

Belongs to the glycosyl hydrolase 47 family. The cofactor is Ca(2+).

The protein localises to the golgi apparatus membrane. It carries out the reaction N(4)-(alpha-D-Man-(1-&gt;2)-alpha-D-Man-(1-&gt;2)-alpha-D-Man-(1-&gt;3)-[alpha-D-Man-(1-&gt;2)-alpha-D-Man-(1-&gt;3)-[alpha-D-Man-(1-&gt;2)-alpha-D-Man-(1-&gt;6)]-alpha-D-Man-(1-&gt;6)]-beta-D-Man-(1-&gt;4)-beta-D-GlcNAc-(1-&gt;4)-beta-D-GlcNAc)-L-asparaginyl-[protein] (N-glucan mannose isomer 9A1,2,3B1,2,3) + 4 H2O = N(4)-(alpha-D-Man-(1-&gt;3)-[alpha-D-Man-(1-&gt;3)-[alpha-D-Man-(1-&gt;6)]-alpha-D-Man-(1-&gt;6)]-beta-D-Man-(1-&gt;4)-beta-D-GlcNAc-(1-&gt;4)-beta-D-GlcNAc)-L-asparaginyl-[protein] (N-glucan mannose isomer 5A1,2) + 4 beta-D-mannose. The catalysed reaction is N(4)-(alpha-D-Man-(1-&gt;2)-alpha-D-Man-(1-&gt;2)-alpha-D-Man-(1-&gt;3)-[alpha-D-Man-(1-&gt;3)-[alpha-D-Man-(1-&gt;2)-alpha-D-Man-(1-&gt;6)]-alpha-D-Man-(1-&gt;6)]-beta-D-Man-(1-&gt;4)-beta-D-GlcNAc-(1-&gt;4)-beta-D-GlcNAc)-L-asparaginyl-[protein] (N-glucan mannose isomer 8A1,2,3B1,3) + 3 H2O = N(4)-(alpha-D-Man-(1-&gt;3)-[alpha-D-Man-(1-&gt;3)-[alpha-D-Man-(1-&gt;6)]-alpha-D-Man-(1-&gt;6)]-beta-D-Man-(1-&gt;4)-beta-D-GlcNAc-(1-&gt;4)-beta-D-GlcNAc)-L-asparaginyl-[protein] (N-glucan mannose isomer 5A1,2) + 3 beta-D-mannose. Its pathway is protein modification; protein glycosylation. Its activity is regulated as follows. Inhibited by both 1-deoxymannojirimycin and kifunensine. Functionally, involved in the maturation of Asn-linked oligosaccharides. Progressively trim alpha-1,2-linked mannose residues from Man(9)GlcNAc(2) to produce Man(5)GlcNAc(2). This is Mannosyl-oligosaccharide 1,2-alpha-mannosidase IA (MAN1A1) from Homo sapiens (Human).